A 178-amino-acid chain; its full sequence is uncharacterized protein (178 aa).

The next 5 helical transmembrane spans lie at 13-33 (GIVLTLTVLINGLIAVLFFMP), 48-68 (MLNAIFNSFTFIFLLAALIMI), 80-100 (ILAAFTTTLLFLICYVTYHSI), 115-135 (IYFFILITHICLSAIIVPLAL), and 155-175 (WTMPLWLYVSLTGVIVYLMIS).

The protein localises to the cell membrane. This is an uncharacterized protein from Bacillus subtilis (strain 168).